The chain runs to 189 residues: Glycerol-3-phosphate acyltransferase (189 aa).

The next 4 helical transmembrane spans lie at 1-21, 79-99, 113-133, and 151-171; these read MVWL…AILL, QQAW…YFNF, LGLY…VFAF, and LLAW…GVIV.

Belongs to the PlsY family. In terms of assembly, probably interacts with PlsX.

The protein resides in the cell inner membrane. The enzyme catalyses an acyl phosphate + sn-glycerol 3-phosphate = a 1-acyl-sn-glycero-3-phosphate + phosphate. Its pathway is lipid metabolism; phospholipid metabolism. Functionally, catalyzes the transfer of an acyl group from acyl-phosphate (acyl-PO(4)) to glycerol-3-phosphate (G3P) to form lysophosphatidic acid (LPA). This enzyme utilizes acyl-phosphate as fatty acyl donor, but not acyl-CoA or acyl-ACP. The sequence is that of Glycerol-3-phosphate acyltransferase from Azotobacter vinelandii (strain DJ / ATCC BAA-1303).